Reading from the N-terminus, the 92-residue chain is Late cornified envelope protein 3E (92 aa).

Low complexity predominate over residues 1–10 (MSCQQNQKQC). 2 disordered regions span residues 1–22 (MSCQQNQKQCQPPPKCPSPKCP) and 64–92 (RRQRSNSCDRGSGQQGGGSGCCHGSGGCC). A compositionally biased stretch (pro residues) spans 11–22 (QPPPKCPSPKCP). The span at 76-92 (GQQGGGSGCCHGSGGCC) shows a compositional bias: gly residues.

It belongs to the LCE family. Interacts with CYSRT1. As to expression, skin-specific. Expression was readily detected in adult trunk skin, adult arm skin, fetal skin, penal skin, vulva, esophagus and tongue. Not expressed in the cervix, rectum, lung, colon, or placenta.

Its function is as follows. Precursors of the cornified envelope of the stratum corneum. This chain is Late cornified envelope protein 3E (LCE3E), found in Homo sapiens (Human).